Reading from the N-terminus, the 609-residue chain is Cell division protein DipM (609 aa).

Positions 1–24 are cleaved as a signal peptide; it reads MRQLWTQAAVIALTAGTLGAPAHA. A disordered region spans residues 21–103; that stretch reads PAHASGQSGQ…PVLRATPPRT (83 aa). The segment covering 25-38 has biased composition (polar residues); that stretch reads SGQSGQRFTPNFPI. Pro residues predominate over residues 79 to 93; it reads LPPPAPVSTPAPAPQ. LysM domains are found at residues 121-165 and 171-215; these read QVRV…KIKG and KAYV…KLLL. 2 stretches are compositionally biased toward low complexity: residues 242 to 258 and 265 to 280; these read AEPAPATTRPATPAATP and PVSEETSEPATTSTTT. Positions 242 to 280 are disordered; sequence AEPAPATTRPATPAATPSRPVRQPVSEETSEPATTSTTT. LysM domains follow at residues 295-339 and 345-389; these read QVHT…KIKG and KAYS…KIAL. The tract at residues 389–457 is disordered; sequence LPDGFRDKGP…AAQPITPPPS (69 aa). A compositionally biased stretch (low complexity) spans 400 to 429; the sequence is RTTTTTRPATPPANTYARVDSSAAAASTPS. A lytM region spans residues 503 to 603; sequence NDGLNIRAPQ…VKDKAKPVDP (101 aa).

It is found in the periplasm. Its function is as follows. Required for efficient cell division, cell polarity and normal cell morphology. Facilitates remodeling of the peptidoglycan layer and, thus, coordinated constriction of the cell envelope during the division process. Plays a critical role in maintaining proper cell envelope architecture during growth and division. Required for normal envelope invagination during cell division and to establish or maintain outer membrane connections throughout the cell envelope. May serve as a regulatory hub coordinating the activities of multiple peptidoglycan-degrading enzymes during cell constriction. Required to position SdpA and SdpB at midcell. This chain is Cell division protein DipM, found in Caulobacter vibrioides (strain NA1000 / CB15N) (Caulobacter crescentus).